We begin with the raw amino-acid sequence, 402 residues long: Multidrug resistance protein MdtH (402 aa).

Residues 1–12 are Cytoplasmic-facing; it reads MSRVSQARNLGK. A helical membrane pass occupies residues 13 to 33; the sequence is YFLLIDNMLVVLGFFVVFPLI. The Periplasmic segment spans residues 34 to 98; it reads SIRFVDQMGW…GFATMGIAHE (65 aa). A helical membrane pass occupies residues 99–116; the sequence is PWLLWFSCFLSGLGGTLF. The Cytoplasmic portion of the chain corresponds to 117–138; sequence DPPRSALVVKLIRPEQRGRFFS. A helical membrane pass occupies residues 139 to 159; sequence LLMMQDSAGAVIGALLGSWLL. Residues 160-164 lie on the Periplasmic side of the membrane; it reads QYDFR. A helical membrane pass occupies residues 165 to 185; that stretch reads LVCATGAILFILCALFNAWLL. Over 186–213 the chain is Cytoplasmic; sequence PAWKLSTARTPVREGMRRVMSNKRFVTY. Residues 214 to 234 form a helical membrane-spanning segment; the sequence is VLTLAGYYMLAVQVMLMLPIM. Over 235–243 the chain is Periplasmic; sequence VNDIAGSPA. A helical membrane pass occupies residues 244–264; that stretch reads AVKWMYAIEACLSLTLLYPIA. At 265–276 the chain is on the cytoplasmic side; that stretch reads RWSEKRFRLEHR. The chain crosses the membrane as a helical span at residues 277 to 297; the sequence is LMAGLLVMSLSMLPIGMVGNL. The Periplasmic portion of the chain corresponds to 298 to 299; it reads QQ. A helical membrane pass occupies residues 300-320; that stretch reads LFTLICAFYIGSVIAEPARET. Residues 321-339 lie on the Cytoplasmic side of the membrane; it reads LSASPADARARGSYMGFSR. A helical transmembrane segment spans residues 340-360; that stretch reads LGLAIGGAISYIGGGWLFDMG. Topologically, residues 361-367 are periplasmic; the sequence is KALAQPE. The helical transmembrane segment at 368–388 threads the bilayer; that stretch reads LPWMMLGIIGFITFLALGWQF. At 389–402 the chain is on the cytoplasmic side; sequence SHKRTPRRMLEPGA.

Belongs to the major facilitator superfamily. DHA1 family. MdtH (TC 2.A.1.2.21) subfamily.

The protein localises to the cell inner membrane. The chain is Multidrug resistance protein MdtH from Salmonella typhi.